A 123-amino-acid polypeptide reads, in one-letter code: Small ribosomal subunit protein uS12 (123 aa).

A disordered region spans residues 1–31 (MPTINQLIRKPREAQKARDKAPALQASPQKR). Over residues 10-21 (KPREAQKARDKA) the composition is skewed to basic and acidic residues. At Asp89 the chain carries 3-methylthioaspartic acid.

The protein belongs to the universal ribosomal protein uS12 family. Part of the 30S ribosomal subunit. Contacts proteins S8 and S17. May interact with IF1 in the 30S initiation complex.

With S4 and S5 plays an important role in translational accuracy. In terms of biological role, interacts with and stabilizes bases of the 16S rRNA that are involved in tRNA selection in the A site and with the mRNA backbone. Located at the interface of the 30S and 50S subunits, it traverses the body of the 30S subunit contacting proteins on the other side and probably holding the rRNA structure together. The combined cluster of proteins S8, S12 and S17 appears to hold together the shoulder and platform of the 30S subunit. The chain is Small ribosomal subunit protein uS12 from Xanthobacter autotrophicus (strain ATCC BAA-1158 / Py2).